A 290-amino-acid chain; its full sequence is Bifunctional protein FolD (290 aa).

NADP(+) contacts are provided by residues 166–168 (GAS) and isoleucine 232.

Belongs to the tetrahydrofolate dehydrogenase/cyclohydrolase family. In terms of assembly, homodimer.

It catalyses the reaction (6R)-5,10-methylene-5,6,7,8-tetrahydrofolate + NADP(+) = (6R)-5,10-methenyltetrahydrofolate + NADPH. The catalysed reaction is (6R)-5,10-methenyltetrahydrofolate + H2O = (6R)-10-formyltetrahydrofolate + H(+). It participates in one-carbon metabolism; tetrahydrofolate interconversion. Functionally, catalyzes the oxidation of 5,10-methylenetetrahydrofolate to 5,10-methenyltetrahydrofolate and then the hydrolysis of 5,10-methenyltetrahydrofolate to 10-formyltetrahydrofolate. This Proteus mirabilis (strain HI4320) protein is Bifunctional protein FolD.